The chain runs to 464 residues: Trigger factor (464 aa).

Residues 162 to 243 (GDFISIDLSA…VGTVKERELP (82 aa)) form the PPIase FKBP-type domain. Residues 428-464 (GASVDTAELFGNGEADTEEAASTDEVASDSAEGEDQK) are disordered.

The protein belongs to the FKBP-type PPIase family. Tig subfamily.

Its subcellular location is the cytoplasm. It carries out the reaction [protein]-peptidylproline (omega=180) = [protein]-peptidylproline (omega=0). Functionally, involved in protein export. Acts as a chaperone by maintaining the newly synthesized protein in an open conformation. Functions as a peptidyl-prolyl cis-trans isomerase. This Rhodococcus opacus (strain B4) protein is Trigger factor.